The following is a 250-amino-acid chain: MGPPMKIEDVRRTAYSMPLTNPAFPPGPYRFFDREYFIITYRTDPEALATIVPEPLEVAEPLVKYEFIRMPDSTGFGDYTETGQVIPVRFKGEEGGYTHAMYLDDEAPIAGGRELWGFPKKLARPKIEVESDVLVGSLHYGSVLCASATMGYKHHKVDHDTVLKSMASPNFILKIIPHVDGSPRICELVRFHLDDVVLKEAWTGPAALGLFPHALCDVARLPVREVISALHFKADLTLGLGSVAFDYMAK.

The active-site Schiff-base intermediate with acetoacetate is Lys-120.

The protein belongs to the ADC family.

The catalysed reaction is acetoacetate + H(+) = acetone + CO2. Catalyzes the conversion of acetoacetate to acetone and carbon dioxide. The polypeptide is Acetoacetate decarboxylase 1 (Bradyrhizobium diazoefficiens (strain JCM 10833 / BCRC 13528 / IAM 13628 / NBRC 14792 / USDA 110)).